The chain runs to 547 residues: MNRDEVAKTFAALKAHREASQETIADLFRVDPNRFENFHIKLDDVLFDYSKHRVTRTTLDLLFALARAAGVEDRRSQLFDGAAVNITEHRPALHMALRKLDGAPVLAEGKDVMPEVLAERQKIFTFAEAIRKGTIKAANGERFTDIVNIGIGGSDLGPRMVVTALAPFVADHLTMHFVSNVDGADLGDTLKKLPLATTLFIVCSKTFTTLETMTNAQTAREAVAEKLGEAAVADHFCAVSTQLDKIAAFGIKSDRVFGFWDWVGGRYSVWSAIGLSVVIAIGAEKFEKFLLGGQDIDQHFQTAPLESNVPVIMALLEIWYRDLWDYATRAVIPYDERMHRFSAYLQQLEMESNGKSVQLSGAPVTESTSPVVWGEPGTNGQHAFFQMLHQGTEIVPIDFLVAAQPSGADAKHHQLLVANCLAQSQALMQGRSLEDVKTLLTAQGLDTAAVNTLAPHKVFPGNRPSSTFLYKRLSPRVLGQLIALYEHKVFVEGVIWNVDSFDQWGVELGKELANKLTPIIRDSEASLEGLDGSTAGLIGEIRKHKKG.

Glu-351 serves as the catalytic Proton donor. Catalysis depends on residues His-382 and Lys-510.

It belongs to the GPI family.

Its subcellular location is the cytoplasm. The catalysed reaction is alpha-D-glucose 6-phosphate = beta-D-fructose 6-phosphate. It participates in carbohydrate biosynthesis; gluconeogenesis. Its pathway is carbohydrate degradation; glycolysis; D-glyceraldehyde 3-phosphate and glycerone phosphate from D-glucose: step 2/4. Catalyzes the reversible isomerization of glucose-6-phosphate to fructose-6-phosphate. This chain is Glucose-6-phosphate isomerase, found in Beijerinckia indica subsp. indica (strain ATCC 9039 / DSM 1715 / NCIMB 8712).